Consider the following 54-residue polypeptide: Photosystem II reaction center protein K (54 aa).

Residues 1–17 (MLLEHVTITLLNNTSFA) constitute a propeptide that is removed on maturation. The helical transmembrane segment at 29–49 (LIDVLPIIPLLFLLLAFVWQA) threads the bilayer.

The protein belongs to the PsbK family. As to quaternary structure, PSII is composed of 1 copy each of membrane proteins PsbA, PsbB, PsbC, PsbD, PsbE, PsbF, PsbH, PsbI, PsbJ, PsbK, PsbL, PsbM, PsbT, PsbY, PsbZ, Psb30/Ycf12, at least 3 peripheral proteins of the oxygen-evolving complex and a large number of cofactors. It forms dimeric complexes.

The protein localises to the plastid. It is found in the chloroplast thylakoid membrane. Functionally, one of the components of the core complex of photosystem II (PSII). PSII is a light-driven water:plastoquinone oxidoreductase that uses light energy to abstract electrons from H(2)O, generating O(2) and a proton gradient subsequently used for ATP formation. It consists of a core antenna complex that captures photons, and an electron transfer chain that converts photonic excitation into a charge separation. The sequence is that of Photosystem II reaction center protein K from Euglena mutabilis.